The primary structure comprises 139 residues: Aspartate 1-decarboxylase (139 aa).

The active-site Schiff-base intermediate with substrate; via pyruvic acid is Ser-25. The residue at position 25 (Ser-25) is a Pyruvic acid (Ser). Thr-57 lines the substrate pocket. Tyr-58 functions as the Proton donor in the catalytic mechanism. 73–75 (GAA) lines the substrate pocket.

It belongs to the PanD family. In terms of assembly, heterooctamer of four alpha and four beta subunits. Pyruvate is required as a cofactor. In terms of processing, is synthesized initially as an inactive proenzyme, which is activated by self-cleavage at a specific serine bond to produce a beta-subunit with a hydroxyl group at its C-terminus and an alpha-subunit with a pyruvoyl group at its N-terminus.

It localises to the cytoplasm. It catalyses the reaction L-aspartate + H(+) = beta-alanine + CO2. The protein operates within cofactor biosynthesis; (R)-pantothenate biosynthesis; beta-alanine from L-aspartate: step 1/1. Functionally, catalyzes the pyruvoyl-dependent decarboxylation of aspartate to produce beta-alanine. The protein is Aspartate 1-decarboxylase of Mycobacterium bovis (strain BCG / Tokyo 172 / ATCC 35737 / TMC 1019).